Consider the following 225-residue polypeptide: Small ribosomal subunit protein eS1 (225 aa).

The protein belongs to the eukaryotic ribosomal protein eS1 family.

The polypeptide is Small ribosomal subunit protein eS1 (Methanococcus maripaludis (strain DSM 14266 / JCM 13030 / NBRC 101832 / S2 / LL)).